A 134-amino-acid polypeptide reads, in one-letter code: Global transcriptional regulator Spx (134 aa).

An intrachain disulfide couples Cys-10 to Cys-13.

Belongs to the ArsC family. Spx subfamily. In terms of assembly, interacts with the C-terminal domain of the alpha subunit of the RNAP.

The protein resides in the cytoplasm. Its function is as follows. Global transcriptional regulator that plays a key role in stress response and exerts either positive or negative regulation of genes. Acts by interacting with the C-terminal domain of the alpha subunit of the RNA polymerase (RNAP). This interaction can enhance binding of RNAP to the promoter region of target genes and stimulate their transcription, or block interaction of RNAP with activator. The sequence is that of Global transcriptional regulator Spx from Streptococcus pyogenes serotype M6 (strain ATCC BAA-946 / MGAS10394).